Reading from the N-terminus, the 613-residue chain is Tetratricopeptide repeat protein 39A (613 aa).

TPR repeat units follow at residues 315–348 (AIFL…QQHW), 505–538 (CLVK…EKKI), and 546–579 (PNAL…YKNY).

This sequence belongs to the TTC39 family.

The sequence is that of Tetratricopeptide repeat protein 39A (TTC39A) from Homo sapiens (Human).